Consider the following 137-residue polypeptide: Endoribonuclease YbeY (137 aa).

Zn(2+) contacts are provided by His-103, His-107, and His-113.

This sequence belongs to the endoribonuclease YbeY family. Zn(2+) is required as a cofactor.

The protein resides in the cytoplasm. Its function is as follows. Single strand-specific metallo-endoribonuclease involved in late-stage 70S ribosome quality control and in maturation of the 3' terminus of the 16S rRNA. The polypeptide is Endoribonuclease YbeY (Acholeplasma laidlawii (strain PG-8A)).